The following is a 222-amino-acid chain: C-reactive protein (222 aa).

Positions 1 to 19 (MEKLSLCLLVIISLSNAFA) are cleaved as a signal peptide. A Pyrrolidone carboxylic acid modification is found at glutamine 20. In terms of domain architecture, Pentraxin (PTX) spans 24–222 (IGKAFVFPKE…EVYVKPQLWP (199 aa)). An intrachain disulfide couples cysteine 55 to cysteine 113. Ca(2+)-binding residues include asparagine 78, glutamate 154, glutamine 155, aspartate 156, and glutamine 166.

This sequence belongs to the pentraxin family. Homopentamer. Pentraxin (or pentaxin) have a discoid arrangement of 5 non-covalently bound subunits. Interacts with FCN1; may regulate monocyte activation by FCN1. Requires Ca(2+) as cofactor. As to expression, found in plasma.

The protein localises to the secreted. In terms of biological role, displays several functions associated with host defense: it promotes agglutination, bacterial capsular swelling, phagocytosis and complement fixation through its calcium-dependent binding to phosphorylcholine. Can interact with DNA and histones and may scavenge nuclear material released from damaged circulating cells. This chain is C-reactive protein (CRP), found in Sus scrofa (Pig).